Here is a 292-residue protein sequence, read N- to C-terminus: MEMO1 family protein PF1638 (292 aa).

The protein belongs to the MEMO1 family.

The protein is MEMO1 family protein PF1638 of Pyrococcus furiosus (strain ATCC 43587 / DSM 3638 / JCM 8422 / Vc1).